A 541-amino-acid polypeptide reads, in one-letter code: Beta-hexosaminidase 1 (541 aa).

Positions Met-1–Ser-20 are cleaved as a signal peptide. N-linked (GlcNAc...) asparagine glycans are attached at residues Asn-44 and Asn-304. An intrachain disulfide couples Cys-295 to Cys-337. The active-site Proton donor is the Glu-332. N-linked (GlcNAc...) asparagine glycosylation is found at Asn-340, Asn-352, and Asn-497. Residues Cys-511 and Cys-538 are joined by a disulfide bond.

It belongs to the glycosyl hydrolase 20 family. Post-translationally, N-glycosylated. Expressed in roots, leaves, stems, flowers and siliques.

It localises to the vacuole. The catalysed reaction is Hydrolysis of terminal non-reducing N-acetyl-D-hexosamine residues in N-acetyl-beta-D-hexosaminides.. Inhibited by N-acetylcastanospermine, 2-acet-amido-1,2-dideoxynojirimycin and PUGNAc. Its function is as follows. Has a broad substrate specificity. Can use synthetic substrates such as pyridylaminated chitotriose, pyridylaminated chitobiose, p-nitrophenyl-beta-N-acetylglucosaminide, p-nitrophenyl-2-acetamido-2-deoxy-beta-D-glucopyranoside (pNP-GlcNAc), p-nitrophenyl-2-acetamido-2-deoxy-beta-D-galactopyranoside (pNP-GalNAc), 4-methylumbelliferyl-2-acetamido-2-deoxy-beta-D-glucopyranoside (MU-GlcNAc), and 4-methylumbelliferyl-6-sulfo-2-acetamido-2-deoxy-beta-D-glucopyranoside (MU-GlcNAc-6SO(4)) as substrates. Removes terminal GlcNAc residues from alpha1,3- and alpha1,6-mannosyl branches of biantennary N-glycans without any strict branch preference. Required for the presence of paucimannosidic N-glycans in glycoproteins of roots and, to a lower extent, of leaves. This chain is Beta-hexosaminidase 1 (HEXO1), found in Arabidopsis thaliana (Mouse-ear cress).